The sequence spans 339 residues: UDP-N-acetylenolpyruvoylglucosamine reductase (339 aa).

The 172-residue stretch at 18–189 (GIDVKARYFS…LRVRFALTRT (172 aa)) folds into the FAD-binding PCMH-type domain. The active site involves R166. S239 functions as the Proton donor in the catalytic mechanism. E335 is a catalytic residue.

It belongs to the MurB family. The cofactor is FAD.

It is found in the cytoplasm. The catalysed reaction is UDP-N-acetyl-alpha-D-muramate + NADP(+) = UDP-N-acetyl-3-O-(1-carboxyvinyl)-alpha-D-glucosamine + NADPH + H(+). Its pathway is cell wall biogenesis; peptidoglycan biosynthesis. In terms of biological role, cell wall formation. This chain is UDP-N-acetylenolpyruvoylglucosamine reductase, found in Pseudomonas putida (strain ATCC 47054 / DSM 6125 / CFBP 8728 / NCIMB 11950 / KT2440).